The primary structure comprises 346 residues: Holliday junction branch migration complex subunit RuvB (346 aa).

The interval 1 to 182 (MKIELLNTPA…FGISSRFDYY (182 aa)) is large ATPase domain (RuvB-L). Residues I21, R22, G63, K66, T67, T68, 129–131 (EDF), R172, Y182, and R219 contribute to the ATP site. T67 provides a ligand contact to Mg(2+). Residues 183–253 (PPELLERIIL…IAMTTLASLE (71 aa)) form a small ATPAse domain (RuvB-S) region. The tract at residues 256–346 (EEGLDDMDKK…GPLFDAAPAR (91 aa)) is head domain (RuvB-H). Residues R311 and R316 each coordinate DNA.

This sequence belongs to the RuvB family. As to quaternary structure, homohexamer. Forms an RuvA(8)-RuvB(12)-Holliday junction (HJ) complex. HJ DNA is sandwiched between 2 RuvA tetramers; dsDNA enters through RuvA and exits via RuvB. An RuvB hexamer assembles on each DNA strand where it exits the tetramer. Each RuvB hexamer is contacted by two RuvA subunits (via domain III) on 2 adjacent RuvB subunits; this complex drives branch migration. In the full resolvosome a probable DNA-RuvA(4)-RuvB(12)-RuvC(2) complex forms which resolves the HJ.

The protein resides in the cytoplasm. It carries out the reaction ATP + H2O = ADP + phosphate + H(+). Functionally, the RuvA-RuvB-RuvC complex processes Holliday junction (HJ) DNA during genetic recombination and DNA repair, while the RuvA-RuvB complex plays an important role in the rescue of blocked DNA replication forks via replication fork reversal (RFR). RuvA specifically binds to HJ cruciform DNA, conferring on it an open structure. The RuvB hexamer acts as an ATP-dependent pump, pulling dsDNA into and through the RuvAB complex. RuvB forms 2 homohexamers on either side of HJ DNA bound by 1 or 2 RuvA tetramers; 4 subunits per hexamer contact DNA at a time. Coordinated motions by a converter formed by DNA-disengaged RuvB subunits stimulates ATP hydrolysis and nucleotide exchange. Immobilization of the converter enables RuvB to convert the ATP-contained energy into a lever motion, pulling 2 nucleotides of DNA out of the RuvA tetramer per ATP hydrolyzed, thus driving DNA branch migration. The RuvB motors rotate together with the DNA substrate, which together with the progressing nucleotide cycle form the mechanistic basis for DNA recombination by continuous HJ branch migration. Branch migration allows RuvC to scan DNA until it finds its consensus sequence, where it cleaves and resolves cruciform DNA. The polypeptide is Holliday junction branch migration complex subunit RuvB (Chlorobium phaeobacteroides (strain DSM 266 / SMG 266 / 2430)).